The sequence spans 132 residues: MAAGMKGKRSRRRKERKNVEHGCAHIKSTFNNSIVTITDSVGNTLSWASAGGLGFRGSRKSTPFAAQMAAETAAKAAMEHGLKSIEVYVKGPGSGREAAIRSLQAAGLEVTLIKDVTPIPHNGCRPPKRRRV.

Residues methionine 1 to arginine 16 show a composition bias toward basic residues. The segment at methionine 1–glutamate 20 is disordered.

The protein belongs to the universal ribosomal protein uS11 family. Part of the 30S ribosomal subunit. Interacts with proteins S7 and S18. Binds to IF-3.

Its function is as follows. Located on the platform of the 30S subunit, it bridges several disparate RNA helices of the 16S rRNA. Forms part of the Shine-Dalgarno cleft in the 70S ribosome. This chain is Small ribosomal subunit protein uS11, found in Clostridium botulinum (strain Hall / ATCC 3502 / NCTC 13319 / Type A).